Consider the following 389-residue polypeptide: Type II methyltransferase M2.BsuMI (389 aa).

Residues 1 to 299 (MKVVSLFSGI…ENLSQPKGSI (299 aa)) enclose the SAM-dependent MTase C5-type domain. The active site involves C69.

This sequence belongs to the class I-like SAM-binding methyltransferase superfamily. C5-methyltransferase family. As to quaternary structure, monomer. May form a complex with YdiP, also seems to be active alone.

It carries out the reaction a 2'-deoxycytidine in DNA + S-adenosyl-L-methionine = a 5-methyl-2'-deoxycytidine in DNA + S-adenosyl-L-homocysteine + H(+). Its activity is regulated as follows. Somewhat inhibited by MgCl(2) and spermidine, strongly inhibited by MnCl(2). In terms of biological role, a methylase, recognizes the double-stranded sequence 5'-YTCGAR-3', methylates C-3 on both strands, and protects the DNA from cleavage by the BsuMI endonuclease. This Bacillus subtilis (strain 168) protein is Type II methyltransferase M2.BsuMI (ydiP).